Reading from the N-terminus, the 1503-residue chain is DNA-directed RNA polymerase subunit beta' (1503 aa).

The Zn(2+) site is built by Cys71, Cys73, Cys86, and Cys89. Mg(2+) contacts are provided by Asp470, Asp472, and Asp474. Residues Cys800, Cys874, Cys881, and Cys884 each contribute to the Zn(2+) site.

It belongs to the RNA polymerase beta' chain family. In terms of assembly, the RNAP catalytic core consists of 2 alpha, 1 beta, 1 beta' and 1 omega subunit. When a sigma factor is associated with the core the holoenzyme is formed, which can initiate transcription. Mg(2+) is required as a cofactor. Zn(2+) serves as cofactor.

The enzyme catalyses RNA(n) + a ribonucleoside 5'-triphosphate = RNA(n+1) + diphosphate. DNA-dependent RNA polymerase catalyzes the transcription of DNA into RNA using the four ribonucleoside triphosphates as substrates. This is DNA-directed RNA polymerase subunit beta' from Sulfurimonas denitrificans (strain ATCC 33889 / DSM 1251) (Thiomicrospira denitrificans (strain ATCC 33889 / DSM 1251)).